A 514-amino-acid chain; its full sequence is uncharacterized protein (514 aa).

Positions 1–15 (MSSPRGASSMSSRSP) are enriched in low complexity. The segment at 1-22 (MSSPRGASSMSSRSPVNLEPES) is disordered.

This is an uncharacterized protein from Ictaluridae (bullhead catfishes).